A 271-amino-acid polypeptide reads, in one-letter code: Non-homologous end joining protein Ku (271 aa).

The 183-residue stretch at 12-194 (KLSLVTCPVV…DQKPVPELLS (183 aa)) folds into the Ku domain. The tract at residues 225 to 249 (EAKKTPPAKKTKAEEKTGKGSAESN) is disordered.

This sequence belongs to the prokaryotic Ku family. Homodimer. Interacts with LigD.

Its function is as follows. With LigD forms a non-homologous end joining (NHEJ) DNA repair enzyme, which repairs dsDNA breaks with reduced fidelity. Binds linear dsDNA with 5'- and 3'- overhangs but not closed circular dsDNA nor ssDNA. Recruits and stimulates the ligase activity of LigD. This is Non-homologous end joining protein Ku from Methylocella silvestris (strain DSM 15510 / CIP 108128 / LMG 27833 / NCIMB 13906 / BL2).